The chain runs to 360 residues: LETM1 domain-containing protein 1 (360 aa).

Residues 1 to 110 are required and sufficient for mitochondrial import; it reads MALSRVCWAR…KKARRIKTNM (110 aa). Topologically, residues 1 to 137 are cytoplasmic; the sequence is MALSRVCWAR…LRQFRRDVTK (137 aa). A helical membrane pass occupies residues 138 to 158; it reads CLFLGILSIPPFANYLVFLLM. The Mitochondrial intermembrane portion of the chain corresponds to 159 to 360; it reads YLFPRQLLIR…LSINYVGSRR (202 aa). The Letm1 RBD domain maps to 186–360; it reads LRKQSHPEIL…LSINYVGSRR (175 aa).

Interacts with BRI3BP. Interacts (via C-terminal) with SMARCA4; the interaction regulates transcriptional expression of thermogenic genes in brown adipose tissue.

It localises to the mitochondrion outer membrane. The protein resides in the nucleus. Its subcellular location is the mitochondrion inner membrane. Plays an essential role for mitochondrial structure and function, as well as thermogenesis of brown adipocytes. In brown adipose tissue also localizes in the nucleus where it interacts with the chromatin remodeler SMARCA4 to regulate thermogenic genes expression, such as UCP1. May regulate phagocytosis and inflammatory responses to lipopolysaccharide in macrophages. Involved in tumorigenesis and may function as a negative regulator of the p53/TP53. The protein is LETM1 domain-containing protein 1 of Bos taurus (Bovine).